Reading from the N-terminus, the 717-residue chain is uncharacterized protein (717 aa).

It belongs to the asfivirus C717R family.

It localises to the virion. This is an uncharacterized protein from African swine fever virus (strain Badajoz 1971 Vero-adapted) (Ba71V).